The primary structure comprises 486 residues: Galactose-1-phosphate uridylyltransferase (486 aa).

The protein belongs to the galactose-1-phosphate uridylyltransferase type 2 family.

The protein localises to the cytoplasm. The enzyme catalyses alpha-D-galactose 1-phosphate + UDP-alpha-D-glucose = alpha-D-glucose 1-phosphate + UDP-alpha-D-galactose. It participates in carbohydrate metabolism; galactose metabolism. The protein is Galactose-1-phosphate uridylyltransferase of Lacticaseibacillus paracasei (strain ATCC 334 / BCRC 17002 / CCUG 31169 / CIP 107868 / KCTC 3260 / NRRL B-441) (Lactobacillus paracasei).